The chain runs to 269 residues: Phosphate import ATP-binding protein PstB 2 (269 aa).

An ABC transporter domain is found at 23 to 264 (LEVKDLSIYY…PKKQKTEDYI (242 aa)). 55-62 (GPSGCGKS) contributes to the ATP binding site.

It belongs to the ABC transporter superfamily. Phosphate importer (TC 3.A.1.7) family. In terms of assembly, the complex is composed of two ATP-binding proteins (PstB), two transmembrane proteins (PstC and PstA) and a solute-binding protein (PstS).

The protein resides in the cell membrane. The catalysed reaction is phosphate(out) + ATP + H2O = ADP + 2 phosphate(in) + H(+). Its function is as follows. Part of the ABC transporter complex PstSACB involved in phosphate import. Responsible for energy coupling to the transport system. This Bacillus subtilis (strain 168) protein is Phosphate import ATP-binding protein PstB 2.